Consider the following 921-residue polypeptide: Isoleucine--tRNA ligase (921 aa).

A 'HIGH' region motif is present at residues 57-67 (PYANGELHMGH). An L-isoleucyl-5'-AMP-binding site is contributed by glutamate 552. The 'KMSKS' region signature appears at 593 to 597 (KMSKS). An ATP-binding site is contributed by lysine 596. Zn(2+) is bound by residues cysteine 888, cysteine 891, cysteine 908, and cysteine 911.

The protein belongs to the class-I aminoacyl-tRNA synthetase family. IleS type 1 subfamily. Monomer. Zn(2+) is required as a cofactor.

The protein localises to the cytoplasm. The catalysed reaction is tRNA(Ile) + L-isoleucine + ATP = L-isoleucyl-tRNA(Ile) + AMP + diphosphate. Functionally, catalyzes the attachment of isoleucine to tRNA(Ile). As IleRS can inadvertently accommodate and process structurally similar amino acids such as valine, to avoid such errors it has two additional distinct tRNA(Ile)-dependent editing activities. One activity is designated as 'pretransfer' editing and involves the hydrolysis of activated Val-AMP. The other activity is designated 'posttransfer' editing and involves deacylation of mischarged Val-tRNA(Ile). The protein is Isoleucine--tRNA ligase of Listeria innocua serovar 6a (strain ATCC BAA-680 / CLIP 11262).